The sequence spans 549 residues: Thermosome subunit (549 aa).

Residues 528–538 (EKEKEGEKGGG) show a composition bias toward basic and acidic residues. The disordered stretch occupies residues 528 to 549 (EKEKEGEKGGGSEEFSGSSDLD). Positions 540–549 (EEFSGSSDLD) are enriched in low complexity.

Belongs to the TCP-1 chaperonin family. As to quaternary structure, forms an oligomeric complex of eight-membered rings.

Molecular chaperone; binds unfolded polypeptides in vitro, and has a weak ATPase activity. In Pyrococcus horikoshii (strain ATCC 700860 / DSM 12428 / JCM 9974 / NBRC 100139 / OT-3), this protein is Thermosome subunit (ths).